A 341-amino-acid polypeptide reads, in one-letter code: DNA-directed RNA polymerase subunit alpha (341 aa).

An alpha N-terminal domain (alpha-NTD) region spans residues 1 to 233; that stretch reads MVREEVPVST…DLFIPFLHAE (233 aa). The alpha C-terminal domain (alpha-CTD) stretch occupies residues 266–341; it reads IILKRIFIDQ…LKNSNQFESR (76 aa).

The protein belongs to the RNA polymerase alpha chain family. As to quaternary structure, in plastids the minimal PEP RNA polymerase catalytic core is composed of four subunits: alpha, beta, beta', and beta''. When a (nuclear-encoded) sigma factor is associated with the core the holoenzyme is formed, which can initiate transcription.

The protein localises to the plastid. It localises to the chloroplast. It catalyses the reaction RNA(n) + a ribonucleoside 5'-triphosphate = RNA(n+1) + diphosphate. Its function is as follows. DNA-dependent RNA polymerase catalyzes the transcription of DNA into RNA using the four ribonucleoside triphosphates as substrates. The protein is DNA-directed RNA polymerase subunit alpha of Nymphaea alba (White water-lily).